The following is a 258-amino-acid chain: MLASQAGSNFSAAASSNGGQQQQQRRQHPIRPLTIKQMLEAQSVGGGVMVVDGREVTQATVVGRVVGYENANMASGGGAITAKHFGYRITDNTGMIVVRQWIDADRAQEPIPLNTHVRASGTVNVWQQSPIVTGTVVSMADSNEMNYHMLDAILTHLRLTQGNKRAAGNIGSGASVQNSAAAVGVQNMLPGGDNKVLLTDLLVSFIKQNGHGDAGMSMDELTMAAQRYSFTPGDVRTAMRTLAAEGKVYQTHDNRFNI.

A compositionally biased stretch (low complexity) spans 1-24 (MLASQAGSNFSAAASSNGGQQQQQ). The tract at residues 1 to 28 (MLASQAGSNFSAAASSNGGQQQQQRRQH) is disordered. Positions 60–138 (TVVGRVVGYE…SPIVTGTVVS (79 aa)) form a DNA-binding region, OB.

It belongs to the replication factor A protein 2 family. As to quaternary structure, heterotrimer of 51, 28, and 14 kDa chains. Post-translationally, phosphorylated in a cell-cycle-dependent manner (from the S phase until mitosis). Phosphorylated upon DNA damage, which promotes its translocation to nuclear foci.

It is found in the nucleus. The protein resides in the PML body. In terms of biological role, as part of the heterotrimeric replication protein A complex (RPA/RP-A), binds and stabilizes single-stranded DNA intermediates, that form during DNA replication or upon DNA stress. It prevents their reannealing and in parallel, recruits and activates different proteins and complexes involved in DNA metabolism. Thereby, it plays an essential role both in DNA replication and the cellular response to DNA damage. The sequence is that of Replication protein A 28 kDa subunit (RPA2) from Crithidia fasciculata.